Here is a 444-residue protein sequence, read N- to C-terminus: Ribosomal protein uS12 methylthiotransferase RimO (444 aa).

The MTTase N-terminal domain maps to 1–117 (MKVGIISLGC…ITEVISSALK (117 aa)). C10, C46, C80, C154, C158, and C161 together coordinate [4Fe-4S] cluster. The 231-residue stretch at 140 to 370 (YQPGPSAYIK…WEVQKEITRK (231 aa)) folds into the Radical SAM core domain. In terms of domain architecture, TRAM spans 373–441 (EGLVGTEMRV…DYDLIGEMTN (69 aa)).

This sequence belongs to the methylthiotransferase family. RimO subfamily. It depends on [4Fe-4S] cluster as a cofactor.

It is found in the cytoplasm. The catalysed reaction is L-aspartate(89)-[ribosomal protein uS12]-hydrogen + (sulfur carrier)-SH + AH2 + 2 S-adenosyl-L-methionine = 3-methylsulfanyl-L-aspartate(89)-[ribosomal protein uS12]-hydrogen + (sulfur carrier)-H + 5'-deoxyadenosine + L-methionine + A + S-adenosyl-L-homocysteine + 2 H(+). Catalyzes the methylthiolation of an aspartic acid residue of ribosomal protein uS12. This chain is Ribosomal protein uS12 methylthiotransferase RimO, found in Natranaerobius thermophilus (strain ATCC BAA-1301 / DSM 18059 / JW/NM-WN-LF).